The following is a 347-amino-acid chain: Trace amine-associated receptor 4 (347 aa).

Residues 1-37 (MNSPDLWYSPETQFCFAAANNSCPRKARPALVVCAMY) are Extracellular-facing. Residue N20 is glycosylated (N-linked (GlcNAc...) asparagine). 2 disulfides stabilise this stretch: C23–C187 and C106–C191. Residues 38–58 (LVMIGAIVMTMLGNMVVIISI) form a helical membrane-spanning segment. The Cytoplasmic portion of the chain corresponds to 59 to 69 (AHFKQLHSPTN). The chain crosses the membrane as a helical span at residues 70–90 (FLILSMATTDFLLSCVVMPFS). Over 91–110 (MVRSIESCWYFGDLFCKVHS) the chain is Extracellular. The helical transmembrane segment at 111-129 (CCDIMLCTTSIFHLCFISV) threads the bilayer. The Cytoplasmic portion of the chain corresponds to 130 to 149 (DRHYAVCDPLHYVTQITVGV). Residues 150–170 (VGVFLLISWSVPILFAFGLVF) form a helical membrane-spanning segment. At 171 to 197 (SELNLIGAEDFVAAIDCTGLCVLIFNK) the chain is on the extracellular side. The interval 175–188 (LIGAEDFVAAIDCT) is extracellular Loop 2 (ECL2). A helical transmembrane segment spans residues 198 to 218 (LWGVLASFIAFFLPGAIMVGI). Residues 219-260 (YIHIFTVARKHARKIGPGPRTKRALSESKMKATSGKESKATK) lie on the Cytoplasmic side of the membrane. A helical membrane pass occupies residues 261–281 (TLSIVMGVFVLCWLPFFVLTI). At 282 to 296 (TDPFIGFTTPEDLYN) the chain is on the extracellular side. A helical membrane pass occupies residues 297 to 317 (VFLWLGYFNSTFNPIIYGMFY). Over 318 to 347 (PWFRKALRMIVTGTIFRSDSSTSSLHPAHP) the chain is Cytoplasmic.

It belongs to the G-protein coupled receptor 1 family.

It is found in the cell membrane. In terms of biological role, olfactory receptor specific for 2-phenylethylamine, a trace amine present at high concentration in the urine of carnivore species, playing a key role in fear and avoidance responses. 2-phenylethylamine acts as a kairomone in the chemical detection of carnivore odor and triggers fear in rats. This receptor is probably mediated by the G(s)-class of G-proteins which activate adenylate cyclase. This is Trace amine-associated receptor 4 from Rattus norvegicus (Rat).